The chain runs to 642 residues: Nucleolar GTP-binding protein 1 (642 aa).

The region spanning 168-340 is the OBG-type G domain; it reads RTLLICGYPN…VRNKACEKLL (173 aa). GTP-binding positions include 174 to 181, 220 to 224, and 288 to 291; these read GYPNVGKS, DTPGI, and NKTD. Residues 585–642 form a disordered region; it reads MDGVADASMRSKADRMAKLHRRERNRQARQGEADRHATASLPKHLFSGKRGIGSNDRR. Residues 609–621 are compositionally biased toward basic and acidic residues; sequence NRQARQGEADRHA.

This sequence belongs to the TRAFAC class OBG-HflX-like GTPase superfamily. OBG GTPase family. NOG subfamily.

The protein localises to the nucleus. It localises to the nucleolus. In terms of biological role, involved in the biogenesis of the 60S ribosomal subunit. This chain is Nucleolar GTP-binding protein 1 (NOG1), found in Eremothecium gossypii (strain ATCC 10895 / CBS 109.51 / FGSC 9923 / NRRL Y-1056) (Yeast).